Consider the following 799-residue polypeptide: MNIKSLRKKNIQNMDQEEVYNRIKENVAHMDEIQRTMEKQQQTFFQMSLQSKQIAESMKKYSMDAAYFNSRIPITDCLSRASEWQNSISEVFNHLGNLLYDRTTQPLKQTISIQLEMVKEGKKKLKNLSTDTSKSSSANLKKDTEAFERTQKETLQLYNDSELALENSTVQTILSSFESYNDFFQRGVFQMSKIKSDIDNYKKIILETNKVAAKLRNYVPKKTFGIKLEEVFARESNKPLPSFLDEIFRYLEKESINTEGMFRVSAGKSSLEALQQKIESGAPLELSASIIDPHCVSSVLKLFLRSLPEPLVLYNVYSKYLTVAKNNNNNNNNNNNNISNSSSNLNIVGSSGNNNSGGGSGGTIITELRRLISTLPVCNQALLKQILLICSLMNQHRDVTKMDLTNLSVVIGPSILEPIPNLKAEDIQRPETFADFNSLFCLLVEHVLTIFPQVSQTSMDMASLPTTIGKLRSQSDISSQTKPLPSLPTSPQNRSAIITGDSSSPSLNTPPVKSSLNSSDFVIVDNGSNNNNNNNTTNTITNNGIADTATPPPPTTPTAPTTPPPPTTPTSNNIATPIININIPNSSNNNNNNNTKRINNKSNLKVDDYLTPIDMQIYYINISSNLGRIKSYVDDIETVNQGIGLIKLFKKISDDHMAPIKNILNYKFKTEKPPMSNDEDKVLRIKRTLFYTYEITMELISHANNTFESSSIEEPTELSKKLEESFKQLDTILTDELSNIEKQQQQQQQQTNDGGGSGISSNTNTSISGDNSENGDSLNSSTSNQSPLNSSILTQLSNQ.

The 226-residue stretch at 226-451 (IKLEEVFARE…LLVEHVLTIF (226 aa)) folds into the Rho-GAP domain. The segment covering 472–520 (RSQSDISSQTKPLPSLPTSPQNRSAIITGDSSSPSLNTPPVKSSLNSSD) has biased composition (polar residues). 2 disordered regions span residues 472–572 (RSQS…PTSN) and 741–799 (EKQQ…LSNQ). Over residues 525–549 (DNGSNNNNNNNTTNTITNNGIADTA) the composition is skewed to low complexity. Over residues 550–568 (TPPPPTTPTAPTTPPPPTT) the composition is skewed to pro residues. Composition is skewed to low complexity over residues 743 to 752 (QQQQQQQQTN) and 759 to 791 (ISSN…LNSS).

The protein localises to the cytoplasm. Its function is as follows. Rho GTPase-activating protein involved in the signal transduction pathway. In Dictyostelium discoideum (Social amoeba), this protein is Rho GTPase-activating protein gacI (gacI).